A 303-amino-acid chain; its full sequence is Growth/differentiation factor 15 (303 aa).

Positions 1-30 are cleaved as a signal peptide; sequence MAPPALQAQPPGGSQLRFLLFLLLLLLLLS. The propeptide occupies 31 to 188; the sequence is WPSQGDALAM…LRVAAGRGRR (158 aa). Asn-71 is a glycosylation site (N-linked (GlcNAc...) asparagine). Cystine bridges form between Cys-198-Cys-205, Cys-206-Cys-269, Cys-235-Cys-300, and Cys-239-Cys-302.

This sequence belongs to the TGF-beta family. As to quaternary structure, homodimer; disulfide-linked. Interacts with GFRAL and RET; ligand of GFRAL, which mediates GDF15 internalization and cellular signaling through interaction with RET via the formation of a 2:2:2 ternary complex composed of GDF15, GFRAL and RET. In terms of tissue distribution, detected in plasma (at protein level). Highly expressed in liver. Expressed in the distal small intestine, colon and kidney. Expressed in skeletal muscle in response to mitochondrial stress. Expressed by cardiomyocytes, expression is highly increased in heart diseases. Also detected in subcutaneous fat.

It is found in the secreted. Functionally, hormone produced in response to various stresses to confer information about those stresses to the brain, and trigger an aversive response, characterized by nausea and/or loss of appetite. The aversive response is both required to reduce continuing exposure to those stresses at the time of exposure and to promote avoidance behavior in the future. Acts by binding to its receptor, GFRAL, activating GFRAL-expressing neurons localized in the area postrema and nucleus tractus solitarius of the brainstem. It then triggers the activation of neurons localized within the parabrachial nucleus and central amygdala, which constitutes part of the 'emergency circuit' that shapes responses to stressful conditions. The GDF15-GFRAL signal induces expression of genes involved in metabolism, such as lipid metabolism in adipose tissues. Required for avoidance behavior in response to food allergens: induced downstream of mast cell activation to promote aversion and minimize harmful effects of exposure to noxious substances. In addition to suppress appetite, also promotes weight loss by enhancing energy expenditure in muscle: acts by increasing calcium futile cycling in muscle. Contributes to the effect of metformin, an anti-diabetic drug, on appetite reduction and weight loss: produced in the kidney in response to metformin treatment, thereby activating the GDF15-GFRAL response, leading to reduced appetite and weight. Produced in response to anticancer drugs, such as camptothecin or cisplatin, promoting nausea and contributing to malnutrition. Overproduced in many cancers, promoting anorexia in cancer (cachexia). Responsible for the risk of nausea during pregnancy: high levels of GDF15 during pregnancy, mostly originating from embryos, are associated with increased nausea. Maternal sensitivity to nausea is probably determined by pre-pregnancy exposure to GDF15, females with naturally high level of GDF15 being less susceptible to nausea than female mice with low levels of GDF15 before pregnancy. Promotes metabolic adaptation in response to systemic inflammation caused by bacterial and viral infections in order to promote tissue tolerance and prevent tissue damage. Required for tissue tolerance in response to myocardial infarction by acting as an inhibitor of leukocyte integring activation, thereby protecting against cardiac rupture. Inhibits growth hormone signaling on hepatocytes. The sequence is that of Growth/differentiation factor 15 from Mus musculus (Mouse).